The following is a 591-amino-acid chain: NADPH oxidase 1 (591 aa).

Residues 1 to 36 lie on the Cytoplasmic side of the membrane; sequence MAGELRGSRGPLQRIQIAPREAPNLHLTMGNWLVNH. A helical membrane pass occupies residues 37–59; the sequence is WLSVLFLVSWLGLNIFLFVYAFL. Topologically, residues 60-72 are extracellular; sequence NYEKSDKYYYTRE. The helical transmembrane segment at 73–97 threads the bilayer; the sequence is ILGTALALARASALCLNFNSMMILI. Residues 82-316 form the Ferric oxidoreductase domain; that stretch reads RASALCLNFN…YIFERILRFY (235 aa). At 98 to 130 the chain is on the cytoplasmic side; sequence PVCRNLLSFLRGTCSFCNRTLRKPLDHNLTFHK. Residues H129 and H143 each contribute to the heme site. Residues 131-151 traverse the membrane as a helical segment; that stretch reads LVAYMICIFTVIHIIAHLFNF. Topologically, residues 152–195 are extracellular; that stretch reads ERYRRSQQAMDGSLASVLSSLSHPEKEDSWLNPIQSPNMTVMYA. Residue N189 is glycosylated (N-linked (GlcNAc...) asparagine). The chain crosses the membrane as a helical span at residues 196 to 216; sequence AFTSIAGLTGVIATVALVLMV. Over 217–234 the chain is Cytoplasmic; it reads TSAMEFIRRNYFELFWYT. A helical membrane pass occupies residues 235–255; that stretch reads HHLFIVYIICLGIHGLGGIVR. 2 residues coordinate heme: H236 and H248. Residues 256–423 are Extracellular-facing; it reads GQTEESLGES…TVSEDVFQYE (168 aa). Residue N269 is glycosylated (N-linked (GlcNAc...) asparagine). One can recognise an FAD-binding FR-type domain in the interval 317 to 418; the sequence is RSQQKVVITK…DGPFGTVSED (102 aa). Position 365 to 371 (365 to 371) interacts with FAD; that stretch reads HPFTLTS. The chain crosses the membrane as a helical span at residues 424–444; it reads VAVLVGAGIGVTPFASILKSI. The tract at residues 424 to 563 is interaction with NOXO1; it reads VAVLVGAGIG…GVFLCGPRTL (140 aa). Residues 445 to 591 lie on the Cytoplasmic side of the membrane; the sequence is WYKFQRADNK…VQFYFNKETF (147 aa). Phosphothreonine is present on T457.

As to quaternary structure, NOX1, NOXA1, NOXO1, RAC1 and CYBA forms a functional multimeric complex supporting ROS production. Interacts with NOXO1. Interacts (via FAD-binding FR-type domain) with ARHGEF7 (via PH domain). Interacts with NOXA1. It depends on FAD as a cofactor. Post-translationally, phosphorylation at Thr-457 mediated by PKC/PRKBC positively regulates its interaction with NOXA1 and enzyme activity. In terms of tissue distribution, expressed in colon and vascular smooth muscle cells (VSMC).

The protein resides in the cell projection. The protein localises to the invadopodium membrane. It is found in the cell membrane. The enzyme catalyses NADPH + 2 O2 = 2 superoxide + NADP(+) + H(+). The oxidase activity is potentiated by NOXA1 and NOXO1. NADPH oxidase that catalyzes the generation of superoxide from molecular oxygen utilizing NADPH as an electron donor. The protein is NADPH oxidase 1 (Nox1) of Mus musculus (Mouse).